The sequence spans 396 residues: Acetate kinase (396 aa).

N7 provides a ligand contact to Mg(2+). Residue K14 participates in ATP binding. R88 contributes to the substrate binding site. Catalysis depends on D145, which acts as the Proton donor/acceptor. ATP-binding positions include 205-209, 279-281, and 327-331; these read HLGNG, DFR, and GIGEN. Residue E381 coordinates Mg(2+).

It belongs to the acetokinase family. In terms of assembly, homodimer. Mg(2+) is required as a cofactor. It depends on Mn(2+) as a cofactor.

The protein localises to the cytoplasm. It catalyses the reaction acetate + ATP = acetyl phosphate + ADP. It participates in metabolic intermediate biosynthesis; acetyl-CoA biosynthesis; acetyl-CoA from acetate: step 1/2. Catalyzes the formation of acetyl phosphate from acetate and ATP. Can also catalyze the reverse reaction. In Campylobacter jejuni (strain RM1221), this protein is Acetate kinase.